Here is a 294-residue protein sequence, read N- to C-terminus: Potassium-transporting ATPase subunit beta (294 aa).

Residues 1-36 (MAALQEKKSCSQRMAEFRHYCWNPDTGQMLGRTPAR) are Cytoplasmic-facing. Residues 37-57 (WVWISLYYAGFYVVMTGLFAL) form a helical; Signal-anchor for type II membrane protein membrane-spanning segment. At 58 to 294 (CIYVLMQTID…KVEFKLTIQK (237 aa)) the chain is on the extracellular side. N99, N103, N130, N146, and N161 each carry an N-linked (GlcNAc...) asparagine glycan. Residues C131 and C152 are joined by a disulfide bond. C162 and C178 are joined by a disulfide. N193 and N225 each carry an N-linked (GlcNAc...) asparagine glycan. The interval 194–294 (NTAPRVDCTF…KVEFKLTIQK (101 aa)) is immunoglobulin-like. Residues C201 and C266 are joined by a disulfide bond.

It belongs to the X(+)/potassium ATPases subunit beta family. In terms of assembly, the ATPase pump is composed of two subunits: alpha (catalytic) and beta (regulatory). Interacts with alpha subunit ATP12A; this interaction is required for the formation of a functionally active pump and targeting at the plasma membrane. Interacts (via N-terminus) with alpha subunit ATP4A (via the P-domain). N-glycosylation is necessary for assembly and functional expression of the pump at the plasma membrane. In terms of tissue distribution, expressed in parietal cells (at protein level).

The protein localises to the apical cell membrane. It is found in the cell membrane. Functionally, the beta subunit of the gastric H(+)/K(+) ATPase pump which transports H(+) ions in exchange for K(+) ions across the apical membrane of parietal cells. Plays a structural and regulatory role in the assembly and membrane targeting of a functionally active pump. Within a transport cycle, the transfer of a H(+) ion across the membrane is coupled to ATP hydrolysis and is associated with a transient phosphorylation of the alpha subunit that shifts the pump conformation from inward-facing (E1) to outward-facing state (E2). Interacts with the phosphorylation domain of the alpha subunit and functions as a ratchet, stabilizing the lumenal-open E2 conformation and preventing the reverse reaction of the transport cycle. In Mus musculus (Mouse), this protein is Potassium-transporting ATPase subunit beta (Atp4b).